The primary structure comprises 561 residues: Lysine--tRNA ligase (561 aa).

Mg(2+)-binding residues include Glu-409 and Glu-416.

It belongs to the class-II aminoacyl-tRNA synthetase family. As to quaternary structure, homodimer. Requires Mg(2+) as cofactor.

It localises to the cytoplasm. It catalyses the reaction tRNA(Lys) + L-lysine + ATP = L-lysyl-tRNA(Lys) + AMP + diphosphate. In Nostoc sp. (strain PCC 7120 / SAG 25.82 / UTEX 2576), this protein is Lysine--tRNA ligase.